Consider the following 384-residue polypeptide: 8-amino-7-oxononanoate synthase (384 aa).

Arg21 provides a ligand contact to substrate. Residue 108 to 109 (GF) participates in pyridoxal 5'-phosphate binding. His133 provides a ligand contact to substrate. Positions 179, 207, and 233 each coordinate pyridoxal 5'-phosphate. Lys236 is modified (N6-(pyridoxal phosphate)lysine). Thr350 provides a ligand contact to substrate.

The protein belongs to the class-II pyridoxal-phosphate-dependent aminotransferase family. BioF subfamily. In terms of assembly, homodimer. Requires pyridoxal 5'-phosphate as cofactor.

The enzyme catalyses 6-carboxyhexanoyl-[ACP] + L-alanine + H(+) = (8S)-8-amino-7-oxononanoate + holo-[ACP] + CO2. Its pathway is cofactor biosynthesis; biotin biosynthesis. Functionally, catalyzes the decarboxylative condensation of pimeloyl-[acyl-carrier protein] and L-alanine to produce 8-amino-7-oxononanoate (AON), [acyl-carrier protein], and carbon dioxide. The chain is 8-amino-7-oxononanoate synthase from Erwinia tasmaniensis (strain DSM 17950 / CFBP 7177 / CIP 109463 / NCPPB 4357 / Et1/99).